The primary structure comprises 238 residues: Small ribosomal subunit protein uS2 (238 aa).

It belongs to the universal ribosomal protein uS2 family.

The protein is Small ribosomal subunit protein uS2 of Synechococcus sp. (strain CC9311).